An 83-amino-acid polypeptide reads, in one-letter code: Mitochondrial import inner membrane translocase subunit Tim8 (83 aa).

The short motif at 35–60 (CWDVCFADYRPPSKMDGKTQTCIQNC) is the Twin CX3C motif element. 2 disulfides stabilise this stretch: C35–C60 and C39–C56.

The protein belongs to the small Tim family. In terms of assembly, heterohexamer; composed of 3 copies of ddp-1/tim-8 and 3 copies of tin-13/tim-13, named soluble 70 kDa complex. Associates with the TIM22 complex, whose core is composed of tim-22.

It localises to the mitochondrion inner membrane. Mitochondrial intermembrane chaperone that participates in the import and insertion of some multi-pass transmembrane proteins into the mitochondrial inner membrane. Also required for the transfer of beta-barrel precursors from the TOM complex to the sorting and assembly machinery (SAM complex) of the outer membrane. Acts as a chaperone-like protein that protects the hydrophobic precursors from aggregation and guide them through the mitochondrial intermembrane space. The ddp-1/tim-8-tim-13 complex mediates the import of some proteins while the predominant tim-9/tin-9.1-tim-10/tin-10 70 kDa complex mediates the import of much more proteins. The polypeptide is Mitochondrial import inner membrane translocase subunit Tim8 (Caenorhabditis elegans).